Here is a 647-residue protein sequence, read N- to C-terminus: Macrolide export ATP-binding/permease protein MacB (647 aa).

One can recognise an ABC transporter domain in the interval 7–245 (IRLEDICKTF…EATLQPHEEI (239 aa)). Residue 43–50 (GASGSGKS) participates in ATP binding. The next 4 membrane-spanning stretches (helical) occupy residues 274–294 (VLTLLGIIIGVSSVVTMLAIG), 529–549 (VAAISLLVGGIGVMNIMLVSV), 573–593 (FIIEALSVSAIGGAIGVILGL), and 610–630 (FGPVLLAFACAFATGLIFGFL).

Belongs to the ABC transporter superfamily. Macrolide exporter (TC 3.A.1.122) family. Homodimer.

The protein localises to the cell inner membrane. Its function is as follows. Non-canonical ABC transporter that contains transmembrane domains (TMD), which form a pore in the inner membrane, and an ATP-binding domain (NBD), which is responsible for energy generation. Confers resistance against macrolides. The polypeptide is Macrolide export ATP-binding/permease protein MacB (Brucella melitensis biotype 1 (strain ATCC 23456 / CCUG 17765 / NCTC 10094 / 16M)).